Here is a 194-residue protein sequence, read N- to C-terminus: Flagellar transcriptional regulator FlhC (194 aa).

4 residues coordinate Zn(2+): Cys-139, Cys-142, Cys-159, and Cys-162.

This sequence belongs to the FlhC family. Heterohexamer composed of two FlhC and four FlhD subunits. Each FlhC binds a FlhD dimer, forming a heterotrimer, and a hexamer assembles by dimerization of two heterotrimers. Zn(2+) serves as cofactor.

The protein localises to the cytoplasm. Functions in complex with FlhD as a master transcriptional regulator that regulates transcription of several flagellar and non-flagellar operons by binding to their promoter region. Activates expression of class 2 flagellar genes, including fliA, which is a flagellum-specific sigma factor that turns on the class 3 genes. Also regulates genes whose products function in a variety of physiological pathways. This Xenorhabdus nematophila (Achromobacter nematophilus) protein is Flagellar transcriptional regulator FlhC.